Consider the following 181-residue polypeptide: Regulator of G-protein signaling 5 (181 aa).

An RGS domain is found at 64-180 (SLDKLLQNSY…VRSEFYKELI (117 aa)).

Expressed in heart and muscle.

The protein localises to the cytoplasm. It localises to the membrane. Inhibits signal transduction by increasing the GTPase activity of G protein alpha subunits thereby driving them into their inactive GDP-bound form. Binds to G(i)-alpha and G(o)-alpha, but not to G(s)-alpha. The polypeptide is Regulator of G-protein signaling 5 (Rgs5) (Mus musculus (Mouse)).